The sequence spans 367 residues: tRNA-specific 2-thiouridylase MnmA (367 aa).

ATP-binding positions include 13 to 20 (GLSGGVDS) and Met-39. The interval 99 to 101 (NPD) is interaction with target base in tRNA. Residue Cys-104 is the Nucleophile of the active site. Cys-104 and Cys-200 are oxidised to a cystine. Gly-128 provides a ligand contact to ATP. Residues 150 to 152 (KDQ) form an interaction with tRNA region. Residue Cys-200 is the Cysteine persulfide intermediate of the active site. The interval 307–308 (RY) is interaction with tRNA.

The protein belongs to the MnmA/TRMU family.

The protein resides in the cytoplasm. The enzyme catalyses S-sulfanyl-L-cysteinyl-[protein] + uridine(34) in tRNA + AH2 + ATP = 2-thiouridine(34) in tRNA + L-cysteinyl-[protein] + A + AMP + diphosphate + H(+). Functionally, catalyzes the 2-thiolation of uridine at the wobble position (U34) of tRNA, leading to the formation of s(2)U34. This chain is tRNA-specific 2-thiouridylase MnmA, found in Neisseria meningitidis serogroup A / serotype 4A (strain DSM 15465 / Z2491).